We begin with the raw amino-acid sequence, 359 residues long: Small ribosomal subunit protein mS22 (359 aa).

It belongs to the mitochondrion-specific ribosomal protein mS22 family. As to quaternary structure, component of the mitochondrial ribosome small subunit (28S) which comprises a 12S rRNA and about 30 distinct proteins.

It is found in the mitochondrion. The chain is Small ribosomal subunit protein mS22 (MRPS22) from Bos taurus (Bovine).